The following is a 165-amino-acid chain: Glycine cleavage system H protein, mitochondrial (165 aa).

Residues asparagine 57–aspartate 139 enclose the Lipoyl-binding domain. An N6-lipoyllysine modification is found at lysine 98.

The protein belongs to the GcvH family. As to quaternary structure, the glycine cleavage system is composed of four proteins: P, T, L and H. It depends on (R)-lipoate as a cofactor.

It localises to the mitochondrion. Its function is as follows. The glycine cleavage system catalyzes the degradation of glycine. The H protein shuttles the methylamine group of glycine from the P protein to the T protein. This is Glycine cleavage system H protein, mitochondrial (ppl) from Drosophila melanogaster (Fruit fly).